We begin with the raw amino-acid sequence, 39 residues long: Potassium channel toxin alpha-KTx 2.16 (39 aa).

Disulfide bonds link Cys-7–Cys-29, Cys-13–Cys-34, and Cys-17–Cys-36. Isoleucine amide is present on Ile-39.

Belongs to the short scorpion toxin superfamily. Potassium channel inhibitor family. Alpha-KTx 02 subfamily. As to expression, expressed by the venom gland.

The protein localises to the secreted. Functionally, blocks human voltage-gated potassium channels Kv1.2/KCNA2 (IC(50)=0.7 nM), Kv1.3/KCNA3 (IC(50)=26.2 nM) and blocks intermediate conductance calcium-activated potassium channel KCa3.1/KCNN4 (IC(50)=56 nM). This is Potassium channel toxin alpha-KTx 2.16 from Centruroides tecomanus (Scorpion).